A 342-amino-acid polypeptide reads, in one-letter code: Mitochondrial fission factor (342 aa).

Residues 1–322 (MSKGTSSDTS…ENKERAKREM (322 aa)) are Cytoplasmic-facing. Position 115 is a phosphothreonine (threonine 115). Position 146 is a phosphoserine (alanine 146). Residue arginine 149 is modified to Phosphothreonine. Phosphoserine is present on residues lysine 151, serine 155, serine 157, and serine 172. A Phosphothreonine modification is found at threonine 200. Serine 202, serine 229, serine 233, and serine 295 each carry phosphoserine. Positions 291–322 (VDAASLRRQIIKLNRRLQLLEEENKERAKREM) form a coiled coil. A helical; Anchor for type IV membrane protein transmembrane segment spans residues 323 to 340 (VMYSITVAFWLLNSWLWF). Residues 341-342 (RR) are Mitochondrial intermembrane-facing.

This sequence belongs to the Tango11 family. Homodimer. Interacts with DNM1L. Interacts with C11orf65/MFI; the interaction inhibits MFF interaction with DNM1L. Highly expressed in heart, kidney, liver, brain, muscle, and stomach.

The protein resides in the mitochondrion outer membrane. It localises to the peroxisome. The protein localises to the cytoplasmic vesicle. It is found in the secretory vesicle. Its subcellular location is the synaptic vesicle. In terms of biological role, plays a role in mitochondrial and peroxisomal fission. Promotes the recruitment and association of the fission mediator dynamin-related protein 1 (DNM1L) to the mitochondrial surface. May be involved in regulation of synaptic vesicle membrane dynamics by recruitment of DNM1L to clathrin-containing vesicles. This Homo sapiens (Human) protein is Mitochondrial fission factor (MFF).